We begin with the raw amino-acid sequence, 167 residues long: uncharacterized protein (167 aa).

This is an uncharacterized protein from Magallana gigas (Pacific oyster).